The following is a 108-amino-acid chain: UPF0235 protein Rpal_0418 (108 aa).

Belongs to the UPF0235 family.

The sequence is that of UPF0235 protein Rpal_0418 from Rhodopseudomonas palustris (strain TIE-1).